Reading from the N-terminus, the 348-residue chain is Phosphoribosylformylglycinamidine cyclo-ligase (348 aa).

It belongs to the AIR synthase family.

Its subcellular location is the cytoplasm. The catalysed reaction is 2-formamido-N(1)-(5-O-phospho-beta-D-ribosyl)acetamidine + ATP = 5-amino-1-(5-phospho-beta-D-ribosyl)imidazole + ADP + phosphate + H(+). Its pathway is purine metabolism; IMP biosynthesis via de novo pathway; 5-amino-1-(5-phospho-D-ribosyl)imidazole from N(2)-formyl-N(1)-(5-phospho-D-ribosyl)glycinamide: step 2/2. The polypeptide is Phosphoribosylformylglycinamidine cyclo-ligase (Geobacter sp. (strain M21)).